A 47-amino-acid polypeptide reads, in one-letter code: Large ribosomal subunit protein eL40 (47 aa).

The protein belongs to the eukaryotic ribosomal protein eL40 family.

The protein is Large ribosomal subunit protein eL40 of Methanococcus maripaludis (strain C5 / ATCC BAA-1333).